Consider the following 295-residue polypeptide: Indole-3-glycerol phosphate synthase (295 aa).

Belongs to the TrpC family.

It catalyses the reaction 1-(2-carboxyphenylamino)-1-deoxy-D-ribulose 5-phosphate + H(+) = (1S,2R)-1-C-(indol-3-yl)glycerol 3-phosphate + CO2 + H2O. It functions in the pathway amino-acid biosynthesis; L-tryptophan biosynthesis; L-tryptophan from chorismate: step 4/5. This Prochlorococcus marinus subsp. pastoris (strain CCMP1986 / NIES-2087 / MED4) protein is Indole-3-glycerol phosphate synthase.